Reading from the N-terminus, the 434-residue chain is MPPTPTTPAATGAAAAVTPEHARPHRMVRFNPRSDRFHTLSFHHVEFWCADAASAAGRFAFALGAPLAARSDLSTGNSAHASQLLRSGSLAFLFTAPYANGCDAATASLPSFSADAARRFSADHGIAVRSVALRVADAAEAFRASRRRGARPAFAPVDLGRGFAFAEVELYGDVVLRFVSHPDGTDVPFLPGFEGVTNPDAVDYGLTRFDHVVGNVPELAPAAAYIAGFTGFHEFAEFTAEDVGTTESGLNSVVLANNSEGVLLPLNEPVHGTKRRSQIQTFLEHHGGPGVQHIAVASSDVLRTLRKMRARSAMGGFDFLPPPLPKYYEGVRRLAGDVLSEAQIKECQELGVLVDRDDQGVLLQIFTKPVGDRPTLFLEMIQRIGCMEKDERGEEYQKGGCGGFGKGNFSELFKSIEDYEKSLEAKQSAAVQGS.

The segment at 1 to 21 (MPPTPTTPAATGAAAAVTPEH) is disordered. Positions 7 to 19 (TPAATGAAAAVTP) are enriched in low complexity. 2 consecutive VOC domains span residues 41–192 (SFHH…FLPG) and 208–368 (RFDH…IFTK). Fe cation-binding residues include His211, His293, and Glu379.

The protein belongs to the 4HPPD family. Fe cation serves as cofactor.

The protein resides in the cytoplasm. It carries out the reaction 3-(4-hydroxyphenyl)pyruvate + O2 = homogentisate + CO2. The protein operates within amino-acid degradation; L-phenylalanine degradation; acetoacetate and fumarate from L-phenylalanine: step 3/6. It functions in the pathway cofactor biosynthesis; prenylquinone biosynthesis. The chain is 4-hydroxyphenylpyruvate dioxygenase from Hordeum vulgare (Barley).